The primary structure comprises 1212 residues: Peregrin (1212 aa).

A C2H2-type zinc finger spans residues 21 to 47; it reads YECPVETCRKVYKSYSGIEYHLYHYDH. Disordered regions lie at residues 43–87 and 118–176; these read YHYD…SPGR and VVSE…PKLP. A compositionally biased stretch (basic residues) spans 58 to 67; the sequence is LRKHKKKGRQ. Residues 59–221 form an interaction with KAT6A and KAT6B region; that stretch reads RKHKKKGRQS…VEYDMDEEDY (163 aa). Positions 74-85 are enriched in low complexity; sequence QSPSPSEVSQSP. The segment covering 119–130 has biased composition (acidic residues); the sequence is VSEDEEAPEEAP. Ser-120 is subject to Phosphoserine. Lys-147 bears the N6-acetyllysine mark. Basic residues predominate over residues 148–166; it reads SGKHKNKEKRKDSNHHHHS. Ser-237 carries the phosphoserine modification. A PHD-type 1 zinc finger spans residues 272–322; sequence DAVCCICNDGECQNSNVILFCDMCNLAVHQECYGVPYIPEGQWLCRRCLQS. The C2HC pre-PHD-type zinc finger occupies 326–359; that stretch reads AVDCALCPNKGGAFKQTDDGRWAHVVCALWIPEV. The PHD-type 2 zinc-finger motif lies at 383 to 447; sequence LTCYICKQRG…RKTAYCDIHT (65 aa). The disordered stretch occupies residues 447 to 489; that stretch reads TPPGSARRLPALSHSEGEEEEDEEEDEGKSWSSEKVKKAKAKS. Residues Ser-459 and Ser-461 each carry the phosphoserine modification. The segment covering 463 to 473 has biased composition (acidic residues); the sequence is GEEEEDEEEDE. Positions 500–819 are interaction with MEAF6 and ING5; sequence LAEKRAAAPV…IKKEMTALRR (320 aa). A required for RUNX1 and RUNX2 transcriptional activation region spans residues 542–1077; sequence YWTLKRQSRN…RGAGWLSEDE (536 aa). The residue at position 579 (Lys-579) is an N6-acetyllysine. The 105-residue stretch at 627 to 731 folds into the Bromo domain; it reads MQLTPFLILL…EQGGAVLRQA (105 aa). Residues 817-1060 form a disordered region; that stretch reads LRRKLAHQRE…VGTGRGVGHS (244 aa). Residues 823–836 are compositionally biased toward basic and acidic residues; the sequence is HQRETGRDGPERHG. Thr-856 is subject to Phosphothreonine. Residues 856–869 are compositionally biased toward low complexity; the sequence is TDSAAEESSSQETS. Phosphoserine occurs at positions 858, 915, 920, and 924. The segment covering 993-1019 has biased composition (low complexity); it reads PRSSSDSESSSSSSSSAASDRTSTTPS. The residue at position 1074 (Ser-1074) is a Phosphoserine. One can recognise a PWWP domain in the interval 1083-1166; it reads ALDLVWAKCR…RTKLVPLGVN (84 aa). A Phosphoserine modification is found at Ser-1185.

In terms of assembly, component of some HBO1 complex composed of KAT7/HBO1, MEAF6, ING5, and BRPF1. Component of the MOZ/MORF complex composed at least of ING5, KAT6A, KAT6B, MEAF6 and one of BRPF1, BRD1/BRPF2 and BRPF3. Interacts (via PHD-type zinc finger domains) with unmethylated histone H3 at 'Lys-4' (H3K4me0). Interacts with trimethylated 'Lys-36' of histone H3 (H3K36me3). Interacts with ING5; interaction directs BRPF1 to H4K4me3-enriched chromatin at the 5' of active genes. Interacts with KAT7. In terms of processing, acetylated by KAT6A. In terms of tissue distribution, expressed at low level in most tissues, with high expression in the testis and specific regions of the brain.

The protein resides in the nucleus. The protein localises to the chromosome. It is found in the cytoplasm. Functionally, scaffold subunit of various histone acetyltransferase (HAT) complexes, such as the MOZ/MORF and HBO1 complexes, which have a histone H3 acetyltransferase activity. Plays a key role in HBO1 complex by directing KAT7/HBO1 specificity towards histone H3 'Lys-14' acetylation (H3K14ac). Some HAT complexes preferentially mediate histone H3 'Lys-23' (H3K23ac) acetylation. Positively regulates the transcription of RUNX1 and RUNX2. The polypeptide is Peregrin (Mus musculus (Mouse)).